A 163-amino-acid polypeptide reads, in one-letter code: Photosystem II extrinsic protein V (163 aa).

Positions 1 to 26 (MLKRSSWLAALLGLLTVVSTSTHTYA) are cleaved as a signal peptide. Residues C63, C66, H67, and H118 each contribute to the heme c site.

The protein belongs to the cytochrome c family. PsbV subfamily. In terms of assembly, PSII is composed of 1 copy each of membrane proteins PsbA, PsbB, PsbC, PsbD, PsbE, PsbF, PsbH, PsbI, PsbJ, PsbK, PsbL, PsbM, PsbT, PsbY, PsbZ, Psb30/Ycf12, at least 3 peripheral proteins of the oxygen-evolving complex and a large number of cofactors. It forms dimeric complexes. The extrinsic subunits in red algae are PsbO (OEC33), PsbQ', cytochrome c-550 and PsbU. Heme c serves as cofactor.

The protein localises to the plastid. The protein resides in the chloroplast thylakoid membrane. In terms of biological role, one of the extrinsic, lumenal subunits of photosystem II (PSII). PSII is a light-driven water plastoquinone oxidoreductase, using light energy to abstract electrons from H(2)O, generating a proton gradient subsequently used for ATP formation. The extrinsic proteins stabilize the structure of photosystem II oxygen-evolving complex (OEC), the ion environment of oxygen evolution and protect the OEC against heat-induced inactivation. This Pyropia yezoensis (Susabi-nori) protein is Photosystem II extrinsic protein V.